Reading from the N-terminus, the 92-residue chain is Acylphosphatase (92 aa).

The Acylphosphatase-like domain maps to 5–92; it reads RVKVKVNGRV…GVFERFEVRF (88 aa). Active-site residues include R20 and N38.

The protein belongs to the acylphosphatase family.

The enzyme catalyses an acyl phosphate + H2O = a carboxylate + phosphate + H(+). In Syntrophotalea carbinolica (strain DSM 2380 / NBRC 103641 / GraBd1) (Pelobacter carbinolicus), this protein is Acylphosphatase (acyP).